A 151-amino-acid chain; its full sequence is UPF0178 protein VSAL_I0701 (151 aa).

The protein belongs to the UPF0178 family.

The sequence is that of UPF0178 protein VSAL_I0701 from Aliivibrio salmonicida (strain LFI1238) (Vibrio salmonicida (strain LFI1238)).